The sequence spans 302 residues: Meiotic recombination protein rec14 (302 aa).

7 WD repeats span residues 14–51 (AHQADIYSLNVVAGNLWSASGDSKIKKWSIGDAEHSLV), 57–96 (PHKLGVHHLATSLDENVVVSCGFGQDVYVWNPETNEFRDL), 101–140 (QHPSECWSSCISPDGQTIAFTSVDGRIAVWDNPSDCKISE), 142–184 (DTKG…HVLS), 185–226 (GHTS…GQLR), 227–266 (GHAAWIFAVAFNPVGDLLLSADVEGKIKIWDIDTMECIST), and 269–302 (ETDGAIWAVAWYKNGFIVAGADKSIRWYRAAATE).

In terms of assembly, component of the DSB catalytic core (DSBC) complex, composed of at least rec12, rec6 and rec14. The complex interacts with mde2.

Required for formation of the rec12-mediated double-strand breaks (DSBs) that initiate meiotic recombination. The chain is Meiotic recombination protein rec14 from Schizosaccharomyces pombe (strain 972 / ATCC 24843) (Fission yeast).